The chain runs to 383 residues: Acetylornithine deacetylase (383 aa).

Histidine 80 is a Zn(2+) binding site. Residue aspartate 82 is part of the active site. Aspartate 112 lines the Zn(2+) pocket. Glutamate 144 is an active-site residue. The Zn(2+) site is built by glutamate 145, glutamate 169, and histidine 355.

Belongs to the peptidase M20A family. ArgE subfamily. Homodimer. Zn(2+) serves as cofactor. The cofactor is Co(2+). It depends on glutathione as a cofactor.

It localises to the cytoplasm. It carries out the reaction N(2)-acetyl-L-ornithine + H2O = L-ornithine + acetate. It participates in amino-acid biosynthesis; L-arginine biosynthesis; L-ornithine from N(2)-acetyl-L-ornithine (linear): step 1/1. Its function is as follows. Catalyzes the hydrolysis of the amide bond of N(2)-acetylated L-amino acids. Cleaves the acetyl group from N-acetyl-L-ornithine to form L-ornithine, an intermediate in L-arginine biosynthesis pathway, and a branchpoint in the synthesis of polyamines. This chain is Acetylornithine deacetylase, found in Escherichia coli O8 (strain IAI1).